Consider the following 238-residue polypeptide: DnaA regulatory inactivator Hda (238 aa).

This sequence belongs to the DnaA family. HdA subfamily. In terms of assembly, the active form seems to be an ADP-bound monomer. Forms the RIDA complex (regulatory inactivation of DnaA) of ATP-DnaA, ADP-Hda and the DNA-loaded beta sliding clamp (dnaN).

Functionally, mediates the interaction of DNA replication initiator protein DnaA with DNA polymerase subunit beta sliding clamp (dnaN). Stimulates hydrolysis of ATP-DnaA to ADP-DnaA, rendering DnaA inactive for reinitiation, a process called regulatory inhibition of DnaA or RIDA. The polypeptide is DnaA regulatory inactivator Hda (Pectobacterium atrosepticum (strain SCRI 1043 / ATCC BAA-672) (Erwinia carotovora subsp. atroseptica)).